A 155-amino-acid polypeptide reads, in one-letter code: Probable Brix domain-containing ribosomal biogenesis protein (155 aa).

A Brix domain is found at 1–155 (MLITSSRKPS…KNYRKMVMSE (155 aa)).

Functionally, probably involved in the biogenesis of the ribosome. The polypeptide is Probable Brix domain-containing ribosomal biogenesis protein (Methanococcoides burtonii (strain DSM 6242 / NBRC 107633 / OCM 468 / ACE-M)).